The chain runs to 888 residues: Leucine--tRNA ligase (888 aa).

Residues 43–53 carry the 'HIGH' region motif; that stretch reads PYPSGRIHMGH. The short motif at 644–648 is the 'KMSKS' region element; sequence KMSKS. ATP is bound at residue Lys-647.

Belongs to the class-I aminoacyl-tRNA synthetase family.

The protein localises to the cytoplasm. It carries out the reaction tRNA(Leu) + L-leucine + ATP = L-leucyl-tRNA(Leu) + AMP + diphosphate. The protein is Leucine--tRNA ligase of Rhodopseudomonas palustris (strain BisA53).